The following is a 602-amino-acid chain: Sulfite reductase [NADPH] hemoprotein beta-component (602 aa).

The interval methionine 1–proline 23 is disordered. Residues cysteine 458, cysteine 464, cysteine 503, and cysteine 507 each coordinate [4Fe-4S] cluster. Residue cysteine 507 coordinates siroheme.

It belongs to the nitrite and sulfite reductase 4Fe-4S domain family. Alpha(8)-beta(8). The alpha component is a flavoprotein, the beta component is a hemoprotein. Siroheme serves as cofactor. [4Fe-4S] cluster is required as a cofactor.

The enzyme catalyses hydrogen sulfide + 3 NADP(+) + 3 H2O = sulfite + 3 NADPH + 4 H(+). Its pathway is sulfur metabolism; hydrogen sulfide biosynthesis; hydrogen sulfide from sulfite (NADPH route): step 1/1. Functionally, component of the sulfite reductase complex that catalyzes the 6-electron reduction of sulfite to sulfide. This is one of several activities required for the biosynthesis of L-cysteine from sulfate. The chain is Sulfite reductase [NADPH] hemoprotein beta-component from Methylobacterium sp. (strain 4-46).